We begin with the raw amino-acid sequence, 402 residues long: 4-hydroxy-3-methylbut-2-enyl diphosphate reductase (402 aa).

Cys66 contacts [4Fe-4S] cluster. His96 provides a ligand contact to (2E)-4-hydroxy-3-methylbut-2-enyl diphosphate. Position 96 (His96) interacts with dimethylallyl diphosphate. His96 contributes to the isopentenyl diphosphate binding site. Position 157 (Cys157) interacts with [4Fe-4S] cluster. Residue His185 coordinates (2E)-4-hydroxy-3-methylbut-2-enyl diphosphate. Dimethylallyl diphosphate is bound at residue His185. His185 lines the isopentenyl diphosphate pocket. Glu187 (proton donor) is an active-site residue. (2E)-4-hydroxy-3-methylbut-2-enyl diphosphate is bound at residue Thr250. Residue Cys288 coordinates [4Fe-4S] cluster. (2E)-4-hydroxy-3-methylbut-2-enyl diphosphate-binding residues include Ser317, Ser318, Asn319, and Ser379. The dimethylallyl diphosphate site is built by Ser317, Ser318, Asn319, and Ser379. Isopentenyl diphosphate-binding residues include Ser317, Ser318, Asn319, and Ser379.

It belongs to the IspH family. It depends on [4Fe-4S] cluster as a cofactor.

It carries out the reaction isopentenyl diphosphate + 2 oxidized [2Fe-2S]-[ferredoxin] + H2O = (2E)-4-hydroxy-3-methylbut-2-enyl diphosphate + 2 reduced [2Fe-2S]-[ferredoxin] + 2 H(+). It catalyses the reaction dimethylallyl diphosphate + 2 oxidized [2Fe-2S]-[ferredoxin] + H2O = (2E)-4-hydroxy-3-methylbut-2-enyl diphosphate + 2 reduced [2Fe-2S]-[ferredoxin] + 2 H(+). It functions in the pathway isoprenoid biosynthesis; dimethylallyl diphosphate biosynthesis; dimethylallyl diphosphate from (2E)-4-hydroxy-3-methylbutenyl diphosphate: step 1/1. The protein operates within isoprenoid biosynthesis; isopentenyl diphosphate biosynthesis via DXP pathway; isopentenyl diphosphate from 1-deoxy-D-xylulose 5-phosphate: step 6/6. Its function is as follows. Catalyzes the conversion of 1-hydroxy-2-methyl-2-(E)-butenyl 4-diphosphate (HMBPP) into a mixture of isopentenyl diphosphate (IPP) and dimethylallyl diphosphate (DMAPP). Acts in the terminal step of the DOXP/MEP pathway for isoprenoid precursor biosynthesis. In Gloeothece citriformis (strain PCC 7424) (Cyanothece sp. (strain PCC 7424)), this protein is 4-hydroxy-3-methylbut-2-enyl diphosphate reductase.